We begin with the raw amino-acid sequence, 617 residues long: Dopamine beta-hydroxylase (617 aa).

Topologically, residues Met1–Arg16 are cytoplasmic. Residues Glu17–Leu37 form a helical; Signal-anchor for type II membrane protein membrane-spanning segment. Over Gln38–Gly617 the chain is Intragranular. The DOMON domain occupies Gly57–Leu173. The N-linked (GlcNAc...) asparagine glycan is linked to Asn64. 6 disulfides stabilise this stretch: Cys154–Cys596, Cys232–Cys283, Cys269–Cys295, Cys390–Cys503, Cys394–Cys565, and Cys466–Cys488. A glycan (N-linked (GlcNAc...) (complex) asparagine) is linked at Asn184. The active site involves Tyr230. The Cu(2+) site is built by His262 and His263. His333 is a Cu(2+) binding site. The N-linked (GlcNAc...) asparagine glycan is linked to Asn344. His412 is a catalytic residue. Cu(2+) contacts are provided by His412, His414, and Met487. An N-linked (GlcNAc...) asparagine glycan is attached at Asn566. The interval Glu590–Gly617 is disordered.

The protein belongs to the copper type II ascorbate-dependent monooxygenase family. Homotetramer; composed of two disulfide-linked dimers. Cu(2+) serves as cofactor. In terms of processing, N-glycosylated. Proteolytic cleavage after the membrane-anchor leads to the release of the soluble form.

It localises to the cytoplasmic vesicle. It is found in the secretory vesicle lumen. Its subcellular location is the secretory vesicle. The protein resides in the chromaffin granule lumen. The protein localises to the secreted. It localises to the secretory vesicle membrane. It is found in the chromaffin granule membrane. It catalyses the reaction dopamine + 2 L-ascorbate + O2 = (R)-noradrenaline + 2 monodehydro-L-ascorbate radical + H2O. Its pathway is catecholamine biosynthesis; (R)-noradrenaline biosynthesis; (R)-noradrenaline from dopamine: step 1/1. Catalyzes the hydroxylation of dopamine to noradrenaline (also known as norepinephrine), and is thus vital for regulation of these neurotransmitters. The protein is Dopamine beta-hydroxylase (DBH) of Homo sapiens (Human).